A 369-amino-acid chain; its full sequence is MTELTSAMDIDVDEIQPRKPINKGKDVVGFGPPPQSKATPWVEKYRPQSLDDVAAHRDIIDTIDRLTNENKLPHLLLYGPPGTGKTSTILAVARKLYGPKYRNMILELNASDDRGIDVVRQQIQDFASTQSFSLGKSSVKLVLLDEADAMTKDAQFALRRVIEKYTKSTRFALIGNHVNKIIPALQSRCTRFRFAPLDGVHMSQRLKHVIEAERLVVSDCGLAALVRLSNGDMRKALNILQSTHMASKEITEEESKQITEEDVYLCTGNPLPKDIEQISHWLLNKPFDECYKDVSEIKTRKGLAIVDIVKEITLFIFKIKMPSAVRVQLINDLADIEYRLSFGCNDKLQLGAIISTFTHARSIIVGAAK.

The segment at 21–40 (INKGKDVVGFGPPPQSKATP) is disordered. ATP is bound at residue 79–86 (GPPGTGKT).

The protein belongs to the activator 1 small subunits family. Heterotetramer of subunits RFC2, RFC3, RFC4 and RFC5 that can form a complex with RFC1.

It is found in the nucleus. Its function is as follows. Functions in cell replication and proliferation. May be involved in chromatin assembly and remodeling. Plays a role in the negative control of pathogenesis-related gene expression and systemic acquired resistance (SAR). The chain is Replication factor C subunit 5 (RFC5) from Arabidopsis thaliana (Mouse-ear cress).